The following is a 256-amino-acid chain: Small ribosomal subunit protein eS1 (256 aa).

Residue Ala-2 is modified to N-acetylalanine; partial.

Belongs to the eukaryotic ribosomal protein eS1 family. Component of the small ribosomal subunit. Mature ribosomes consist of a small (40S) and a large (60S) subunit. The 40S subunit contains about 33 different proteins and 1 molecule of RNA (18S). The 60S subunit contains about 49 different proteins and 3 molecules of RNA (25S, 5.8S and 5S).

Its subcellular location is the cytoplasm. This is Small ribosomal subunit protein eS1 from Meyerozyma guilliermondii (strain ATCC 6260 / CBS 566 / DSM 6381 / JCM 1539 / NBRC 10279 / NRRL Y-324) (Yeast).